The sequence spans 192 residues: Adenine phosphoribosyltransferase (192 aa).

The protein belongs to the purine/pyrimidine phosphoribosyltransferase family. In terms of assembly, homodimer.

The protein localises to the cytoplasm. The catalysed reaction is AMP + diphosphate = 5-phospho-alpha-D-ribose 1-diphosphate + adenine. It functions in the pathway purine metabolism; AMP biosynthesis via salvage pathway; AMP from adenine: step 1/1. In terms of biological role, catalyzes a salvage reaction resulting in the formation of AMP, that is energically less costly than de novo synthesis. The protein is Adenine phosphoribosyltransferase of Corynebacterium efficiens (strain DSM 44549 / YS-314 / AJ 12310 / JCM 11189 / NBRC 100395).